The following is a 497-amino-acid chain: MSKRPSISFSEFEVPQKGVAVVLVAKGGGFADEAAKAVGGAEKIARIADISGFTGALGKTAEAIETTPAGVEKIVLVGVGEPGKLGNDDWLKIGGAAFSQIGNAERVTLTLALPETTIAGDEAADVALGMVLRSYKFDRYKTRKSEENGEPKHAAKITICVADTHSARKTFEVAEAVADGVIQARNLVNEPANILGPVEFAEEAEKLEKLGVKVEVLGEKELKKLGMGALLGVAQGSVRPPRLVVMEWHGAKGKEKPIAFVGKGVVFDTGGISIKPAANMEDMKGDMGGAAAVTGLMRALAGRKAKVNAIGVIGLVENMPDGNAQRPGDIVTSMSGQTIEVINTDAEGRLVLADALHYTNDRFKPRFIINLATLTGAVMVALGQYHAGLFSNDDELADQLYDAGQSTGEKLWRLPLGTEYDKMIDSKFADMKNSAGRYGGSITAAQFLKRFVGETPWAHLDVAGTAMGSPANEYNQSWASGFGVRLLDRLVRDQFES.

The Mn(2+) site is built by Lys-263 and Asp-268. Residue Lys-275 is part of the active site. Mn(2+) contacts are provided by Asp-286, Asp-345, and Glu-347. Arg-349 is a catalytic residue.

This sequence belongs to the peptidase M17 family. The cofactor is Mn(2+).

It is found in the cytoplasm. The enzyme catalyses Release of an N-terminal amino acid, Xaa-|-Yaa-, in which Xaa is preferably Leu, but may be other amino acids including Pro although not Arg or Lys, and Yaa may be Pro. Amino acid amides and methyl esters are also readily hydrolyzed, but rates on arylamides are exceedingly low.. The catalysed reaction is Release of an N-terminal amino acid, preferentially leucine, but not glutamic or aspartic acids.. Functionally, presumably involved in the processing and regular turnover of intracellular proteins. Catalyzes the removal of unsubstituted N-terminal amino acids from various peptides. This is Probable cytosol aminopeptidase from Brucella suis biovar 1 (strain 1330).